Here is a 348-residue protein sequence, read N- to C-terminus: Protein RecA (348 aa).

64 to 71 lines the ATP pocket; it reads GPESSGKT. A compositionally biased stretch (basic and acidic residues) spans 325-335; it reads YEIDGSSKEPL. The tract at residues 325 to 348 is disordered; the sequence is YEIDGSSKEPLDEKEETLSLLDDE.

It belongs to the RecA family.

The protein resides in the cytoplasm. Its function is as follows. Can catalyze the hydrolysis of ATP in the presence of single-stranded DNA, the ATP-dependent uptake of single-stranded DNA by duplex DNA, and the ATP-dependent hybridization of homologous single-stranded DNAs. It interacts with LexA causing its activation and leading to its autocatalytic cleavage. This Listeria monocytogenes serotype 1/2a (strain 10403S) protein is Protein RecA.